We begin with the raw amino-acid sequence, 365 residues long: MKKTALYPWHEKAGARIIDFGGWLMPVQYSGIIAEHRAVRSAAGLFDVSHMGNFYVKGPRAEEFLQHMTTNDLSRAKNGQAQYNVMLYPNGGIVDDLIIYRIDAQTFFIIVNAGNCEKDYQWLQEHAAEYDGVVLEDHSSAMSLIALQGPKAFDILKKVLPSLDAPSLGSFHFCTLEYSGAELMVARTGYTGEIGVEICMPNEMALPLWEDLLEAGRPEGILPIGLGARDTLRLEMGYSLYGHEIDQDTNPLEARLKWVVKLDKGHFIGREACLQVELNPKRSVAGFVLEGRALPRQGCKLFNSDHQEIGRVCSGTLSPTLQEPVGTCSLLREYQKPGTRVFVEIRGTMQPGTIRPLPFVKTSLS.

Belongs to the GcvT family. In terms of assembly, the glycine cleavage system is composed of four proteins: P, T, L and H.

It carries out the reaction N(6)-[(R)-S(8)-aminomethyldihydrolipoyl]-L-lysyl-[protein] + (6S)-5,6,7,8-tetrahydrofolate = N(6)-[(R)-dihydrolipoyl]-L-lysyl-[protein] + (6R)-5,10-methylene-5,6,7,8-tetrahydrofolate + NH4(+). Functionally, the glycine cleavage system catalyzes the degradation of glycine. In Chlorobium luteolum (strain DSM 273 / BCRC 81028 / 2530) (Pelodictyon luteolum), this protein is Aminomethyltransferase.